The following is a 1125-amino-acid chain: Transient receptor potential cation channel subfamily A member 1 (1125 aa).

Topologically, residues 1 to 721 (MKRGLRRILL…KWCAYGFRAH (721 aa)) are cytoplasmic. ANK repeat units follow at residues 63-94 (ENLC…VLNI), 98-127 (YGNT…NPNL), 131-161 (NMMS…NINL), 165-194 (NGNT…KLCK), 198-227 (WGDY…KNGY), 239-268 (KKAS…HIDM), 272-301 (AKCM…GSSD), 309-338 (NQET…DINS), and 342-371 (EGRS…KVDI). Cystine bridges form between Cys193–Cys666, Cys463–Cys666, Cys609–Cys622, Cys622–Cys666, and Cys634–Cys859. Pro395 is modified (4-hydroxyproline; transient). 5 ANK repeats span residues 413–442 (DGCT…SIHS), 446–475 (DKKS…DTRL), 482–511 (HGMT…LFLS), 514–543 (NGWT…KCTD), and 548–577 (EGNT…DILL). 2 residues coordinate (E)-cinnamaldehyde: Cys415 and Cys422. Residue Cys622 participates in (E)-cinnamaldehyde binding. The residue at position 634 (Cys634) is a Cysteine sulfenic acid (-SOH); transient; in hyperoxia. Residues Cys642, Cys666, and Lys712 each coordinate (E)-cinnamaldehyde. A helical membrane pass occupies residues 722 to 742 (MMNLGSYCLGLIPMTLLVVKI). At 743–767 (QPGMAFNSTGIINGTSSTHEERIDT) the chain is on the extracellular side. N-linked (GlcNAc...) asparagine glycans are attached at residues Asn749 and Asn755. A helical transmembrane segment spans residues 768–788 (LNSFPIKICMILVFLSSIFGY). Topologically, residues 789–806 (CKEVIQIFQQKRNYFLDY) are cytoplasmic. Ca(2+) is bound by residues Glu791, Gln794, Asn808, and Glu811. The helical transmembrane segment at 807–827 (NNALEWVIYTTSIIFVLPLFL) threads the bilayer. Residues 828 to 832 (NIPAY) are Extracellular-facing. Residues 833–853 (MQWQCGAIAIFFYWMNFLLYL) traverse the membrane as a helical segment. Residues 854 to 876 (QRFENCGIFIVMLEVIFKTLLRS) are Cytoplasmic-facing. The residue at position 859 (Cys859) is a Cysteine sulfenic acid (-SOH); transient; in hyperoxia. A helical membrane pass occupies residues 877–897 (TGVFIFLLLAFGLSFYVLLNF). At 898 to 904 (QDAFSTP) the chain is on the extracellular side. Residues 905–925 (LLSLIQTFSMMLGDINYRDAF) constitute an intramembrane region (pore-forming). At 926-937 (LEPLFRNELAYP) the chain is on the extracellular side. Residues 938–959 (VLTFGQLIAFTMFVPIVLMNLL) traverse the membrane as a helical segment. Residues 960 to 1125 (IGLAVGDIAE…THCSISHPDF (166 aa)) are Cytoplasmic-facing. Residues 1044–1073 (MEILKQKYRLKDLTSLLEKQHELIKLIIQK) are a coiled coil. 1048–1054 (KQKYRLK) lines the a 1,2-diacyl-sn-glycero-3-phospho-(1D-myo-inositol) pocket.

The protein belongs to the transient receptor (TC 1.A.4) family. Homotetramer. Interacts with TMEM100. Interacts with EGLN1. Interacts with the scorpion wasabi receptor toxin at the same site that electrophiles but in a non-covalent manner. TRPA1 activation by electrophiles occurs though covalent modification of specific cysteine residues in the N-terminal cytoplasmic domain. Post-translationally, hydroxylation is required for TRPA1 activity inhibition in normoxia. In hypoxia, the decrease in oxygen concentration diminishes the activity of the hydroxylase EGLN1, thus relieving TRPA1 from inhibition and ultimately leading to channel activation. In terms of processing, oxidation of Cys-634 and Cys-859 in hyperoxia may override the hydroxylase EGLN1-mediated inhibition, causing TRPA1 activation. In terms of tissue distribution, expressed in inner ear (at protein level). Specifically expressed in a subset of nociceptive neurons. Expressed in the same neurons that TRPV1. In contrast, it is not expressed in neurons expressing TRPM8. Expressed in the superior cervical ganglion of vagus nerve. Expressed in the inferior ganglion (nodose ganglion) of vagus nerve. Expressed in dorsal root ganglia neurons.

Its subcellular location is the cell membrane. It catalyses the reaction Ca(2+)(in) = Ca(2+)(out). The enzyme catalyses Mg(2+)(in) = Mg(2+)(out). It carries out the reaction Na(+)(in) = Na(+)(out). The catalysed reaction is K(+)(in) = K(+)(out). It catalyses the reaction Zn(2+)(in) = Zn(2+)(out). With respect to regulation, electrophilic ligands activate the channel by covalent modification of intracellular cysteines. Cys-622 plays a key role in covalent binding of electrophiles. Extracellular Ca(2+) both potentiates and inactivates TRPA1; a rapid potentiation follows by slow desensitization. Activated by increase in intracellular Ca(2+) concentration. Inhibited by the potent blocker of TRPV channels ruthenium red, A-967079. Activated by icilin, sulfhydryl reactive agent MTSEA, N-methyl maleimide (NMM), and PF-4840154. Also activated by hyperoxia. Activated by intracellular Zn(2+). TRPA1 activation may critically depend on the presence of small intracellular compounds such as polyphosphates. Ligand-activated Ca(2+)-permeable, nonselective cation channel. Involved in pain detection and possibly also in cold perception, oxygen concentration perception, cough, itch, and inner ear function. Has a relatively high Ca(2+) selectivity, with a preference for divalent over monovalent cations (Ca(2+) &gt; Ba(2+) &gt; Mg(2+) &gt; NH4(+) &gt; Li(+) &gt; K(+)), the influx of cation into the cytoplasm, leads to membrane depolarization. Has a central role in the pain response to endogenous inflammatory mediators, such as bradykinin and to a diverse array of irritants. Activated by a large variety of structurally unrelated electrophilic and non-electrophilic chemical compounds, such as allylthiocyanate (AITC) from mustard oil or wasabi, cinnamaldehyde, diallyl disulfide (DADS) from garlic, and acrolein, an environmental irritant. Electrophilic ligands activate TRPA1 by interacting with critical N-terminal Cys residues in a covalent manner. Non-electrophile agonists bind at distinct sites in the transmembrane domain to promote channel activation. Also acts as an ionotropic cannabinoid receptor by being activated by delta(9)-tetrahydrocannabinol (THC), the psychoactive component of marijuana. May be a component for the mechanosensitive transduction channel of hair cells in inner ear, thereby participating in the perception of sounds. In Mus musculus (Mouse), this protein is Transient receptor potential cation channel subfamily A member 1.